The following is a 481-amino-acid chain: Delta(14)-sterol reductase ERG24B (481 aa).

8 helical membrane passes run 11–31, 80–100, 125–145, 149–169, 244–264, 279–299, 313–333, and 427–447; these read FGGP…MQVL, LFAY…QIVL, LTGC…WTWI, YIQL…WTYL, TYGF…YYVL, ITSD…VPFL, HLGP…LYIF, and AAPW…FLLI.

The protein belongs to the ERG4/ERG24 family.

The protein resides in the endoplasmic reticulum membrane. It catalyses the reaction 4,4-dimethyl-5alpha-cholesta-8,24-dien-3beta-ol + NADP(+) = 4,4-dimethyl-5alpha-cholesta-8,14,24-trien-3beta-ol + NADPH + H(+). It participates in steroid metabolism; ergosterol biosynthesis. Delta(14)-sterol reductase; part of the third module of ergosterol biosynthesis pathway that includes the late steps of the pathway. Catalyzes the reduction of the C14=C15 double bond within 4,4,24-trimethyl ergosta-8,14,24(28)-trienolto produce 4,4-dimethylfecosterol. The third module or late pathway involves the ergosterol synthesis itself through consecutive reactions that mainly occur in the endoplasmic reticulum (ER) membrane. Firstly, the squalene synthase ERG9 catalyzes the condensation of 2 farnesyl pyrophosphate moieties to form squalene, which is the precursor of all steroids. Squalene synthase is crucial for balancing the incorporation of farnesyl diphosphate (FPP) into sterol and nonsterol isoprene synthesis. Secondly, squalene is converted into lanosterol by the consecutive action of the squalene epoxidase ERG1 and the lanosterol synthase ERG7. Then, the delta(24)-sterol C-methyltransferase ERG6 methylates lanosterol at C-24 to produce eburicol. Eburicol is the substrate of the sterol 14-alpha demethylase encoded by CYP51A, CYP51B and CYP51C, to yield 4,4,24-trimethyl ergosta-8,14,24(28)-trienol. CYP51B encodes the enzyme primarily responsible for sterol 14-alpha-demethylation, and plays an essential role in ascospore formation. CYP51A encodes an additional sterol 14-alpha-demethylase, induced on ergosterol depletion and responsible for the intrinsic variation in azole sensitivity. The third CYP51 isoform, CYP51C, does not encode a sterol 14-alpha-demethylase, but is required for full virulence on host wheat ears. The C-14 reductase ERG24 then reduces the C14=C15 double bond which leads to 4,4-dimethylfecosterol. A sequence of further demethylations at C-4, involving the C-4 demethylation complex containing the C-4 methylsterol oxidases ERG25, the sterol-4-alpha-carboxylate 3-dehydrogenase ERG26 and the 3-keto-steroid reductase ERG27, leads to the production of fecosterol via 4-methylfecosterol. ERG28 has a role as a scaffold to help anchor ERG25, ERG26 and ERG27 to the endoplasmic reticulum. The C-8 sterol isomerase ERG2 then catalyzes the reaction which results in unsaturation at C-7 in the B ring of sterols and thus converts fecosterol to episterol. The sterol-C5-desaturases ERG3A and ERG3BB then catalyze the introduction of a C-5 double bond in the B ring to produce 5-dehydroepisterol. The C-22 sterol desaturases ERG5A and ERG5B further convert 5-dehydroepisterol into ergosta-5,7,22,24(28)-tetraen-3beta-ol by forming the C-22(23) double bond in the sterol side chain. Finally, ergosta-5,7,22,24(28)-tetraen-3beta-ol is substrate of the C-24(28) sterol reductase ERG4 to produce ergosterol. The polypeptide is Delta(14)-sterol reductase ERG24B (Gibberella zeae (strain ATCC MYA-4620 / CBS 123657 / FGSC 9075 / NRRL 31084 / PH-1) (Wheat head blight fungus)).